The following is a 388-amino-acid chain: GTPase Obg (388 aa).

One can recognise an Obg domain in the interval 1-159; that stretch reads MKFVDEAVIR…RSLKLELLLL (159 aa). Residues 160–333 enclose the OBG-type G domain; the sequence is ADVGLLGMPN…LATKLLDFIQ (174 aa). GTP is bound by residues 166-173, 191-195, 213-216, 283-286, and 314-316; these read GMPNAGKS, FTTLV, DIPG, NKAD, and SAY. The Mg(2+) site is built by Ser173 and Thr193.

The protein belongs to the TRAFAC class OBG-HflX-like GTPase superfamily. OBG GTPase family. As to quaternary structure, monomer. Mg(2+) serves as cofactor.

The protein resides in the cytoplasm. An essential GTPase which binds GTP, GDP and possibly (p)ppGpp with moderate affinity, with high nucleotide exchange rates and a fairly low GTP hydrolysis rate. Plays a role in control of the cell cycle, stress response, ribosome biogenesis and in those bacteria that undergo differentiation, in morphogenesis control. The chain is GTPase Obg from Shewanella sp. (strain MR-4).